Reading from the N-terminus, the 90-residue chain is Small ribosomal subunit protein bS16 (90 aa).

Belongs to the bacterial ribosomal protein bS16 family.

This chain is Small ribosomal subunit protein bS16, found in Fervidobacterium nodosum (strain ATCC 35602 / DSM 5306 / Rt17-B1).